The sequence spans 335 residues: Large ribosomal subunit protein uL10 (335 aa).

Positions 304-335 (GAAAPVEEAPVEEKKEEKKEEAAPAAGLGMLF) are disordered. Over residues 314 to 325 (VEEKKEEKKEEA) the composition is skewed to basic and acidic residues.

This sequence belongs to the universal ribosomal protein uL10 family. In terms of assembly, part of the 50S ribosomal subunit. Forms part of the ribosomal stalk which helps the ribosome interact with GTP-bound translation factors. Forms a heptameric L10(L12)2(L12)2(L12)2 complex, where L10 forms an elongated spine to which the L12 dimers bind in a sequential fashion.

Forms part of the ribosomal stalk, playing a central role in the interaction of the ribosome with GTP-bound translation factors. The chain is Large ribosomal subunit protein uL10 from Methanococcus maripaludis (strain C6 / ATCC BAA-1332).